The following is a 132-amino-acid chain: Regulator of ribonuclease activity B (132 aa).

The protein belongs to the RraB family. In terms of assembly, interacts with the C-terminal region of Rne.

It is found in the cytoplasm. Functionally, globally modulates RNA abundance by binding to RNase E (Rne) and regulating its endonucleolytic activity. Can modulate Rne action in a substrate-dependent manner by altering the composition of the degradosome. This is Regulator of ribonuclease activity B from Alteromonas mediterranea (strain DSM 17117 / CIP 110805 / LMG 28347 / Deep ecotype).